We begin with the raw amino-acid sequence, 119 residues long: Ribonuclease P protein component (119 aa).

The protein belongs to the RnpA family. As to quaternary structure, consists of a catalytic RNA component (M1 or rnpB) and a protein subunit.

It catalyses the reaction Endonucleolytic cleavage of RNA, removing 5'-extranucleotides from tRNA precursor.. In terms of biological role, RNaseP catalyzes the removal of the 5'-leader sequence from pre-tRNA to produce the mature 5'-terminus. It can also cleave other RNA substrates such as 4.5S RNA. The protein component plays an auxiliary but essential role in vivo by binding to the 5'-leader sequence and broadening the substrate specificity of the ribozyme. The polypeptide is Ribonuclease P protein component (Syntrophomonas wolfei subsp. wolfei (strain DSM 2245B / Goettingen)).